Here is a 62-residue protein sequence, read N- to C-terminus: Large ribosomal subunit protein bL28 (62 aa).

Residues 1–23 (MGKQCYVTGRKASTGNRRSHALN) are disordered.

It belongs to the bacterial ribosomal protein bL28 family.

The protein is Large ribosomal subunit protein bL28 of Staphylococcus carnosus (strain TM300).